A 45-amino-acid polypeptide reads, in one-letter code: Large ribosomal subunit protein bL34c (45 aa).

Residues 1–21 form a disordered region; the sequence is MIQRTLTGTNRKKTKRSGFRS. The segment covering 10–19 has biased composition (basic residues); the sequence is NRKKTKRSGF.

This sequence belongs to the bacterial ribosomal protein bL34 family.

It localises to the plastid. The protein localises to the chloroplast. The chain is Large ribosomal subunit protein bL34c (rpl34) from Cyanidium caldarium (Red alga).